Consider the following 341-residue polypeptide: Eukaryotic translation initiation factor 2 subunit 1 (341 aa).

The S1 motif domain occupies 16–87 (EDVVMVNVLS…EKGYIDLSKR (72 aa)). Phosphoserine is present on Ser-51. Residues 293–341 (AENAQVAGDDDEEDGADQEGMQFDPEKEFNHKGSGAGRANEEDEEEEED) form a disordered region. Acidic residues predominate over residues 300–309 (GDDDEEDGAD).

This sequence belongs to the eIF-2-alpha family. In terms of assembly, eukaryotic translation initiation factor 2 eIF2 is a heterotrimeric complex composed of an alpha, a beta and a gamma subunit. In terms of processing, phosphorylation of eIF-2-alpha impairs the recycling of eIF-2 between successive rounds of initiation and thus leads to inhibition of translation.

It is found in the cytoplasm. Its subcellular location is the cytosol. Its function is as follows. eIF-2 functions in the early steps of protein synthesis by forming a ternary complex with GTP and initiator tRNA. This pre-initiation complex mediates ribosomal recognition of a start codon during the scanning process of the leader region. The protein is Eukaryotic translation initiation factor 2 subunit 1 of Drosophila melanogaster (Fruit fly).